A 168-amino-acid polypeptide reads, in one-letter code: Oocyte-secreted protein 2 (168 aa).

An N-terminal signal peptide occupies residues 1 to 21 (MGVSMALEVLVYLAVLVWTCA).

Belongs to the PLAC1 family. In terms of tissue distribution, expressed in ovaries. Highly expressed in the germinal vesicles oocytes and metaphase II oocytes.

It localises to the secreted. It is found in the cytoplasm. The polypeptide is Oocyte-secreted protein 2 (Oosp2) (Mus musculus (Mouse)).